The primary structure comprises 263 residues: Renal glandular kallikrein (263 aa).

The signal sequence occupies residues 1 to 18 (MWFLILFLALFLGGIDAA). The propeptide at 19–24 (PPVQSR) is activation peptide. Positions 25–260 (IIGGFNCEKN…YRSWIKDVMA (236 aa)) constitute a Peptidase S1 domain. Intrachain disulfides connect Cys31–Cys175, Cys50–Cys66, Cys153–Cys221, Cys186–Cys200, and Cys211–Cys236. His65 (charge relay system) is an active-site residue. The N-linked (GlcNAc...) asparagine glycan is linked to Asn102. Residue Asp121 is the Charge relay system of the active site. The Charge relay system role is filled by Ser215.

Belongs to the peptidase S1 family. Kallikrein subfamily.

It carries out the reaction Preferential cleavage of Arg-|-Xaa bonds in small molecule substrates. Highly selective action to release kallidin (lysyl-bradykinin) from kininogen involves hydrolysis of Met-|-Xaa or Leu-|-Xaa.. Its function is as follows. Glandular kallikreins cleave Met-Lys and Arg-Ser bonds in kininogen to release Lys-bradykinin. The protein is Renal glandular kallikrein of Mastomys natalensis (African soft-furred rat).